We begin with the raw amino-acid sequence, 239 residues long: MTRDQAREKVIFALDSSEFAHVQYWAETLSDRVGMFKVGKQLFTACGPATVRMIQKFGGEVFLDLKFHDIPNTVAMASLEAARLGVKLFNLHALGGYEMMARTVEALDKEFKGGERAKVLAVTILTSSTEETLRQVGIESPVEEMVVRLATLARKAGIDGVVASPREIPLIREACGPDFLIVTPGVRPAFAALNDQKRVMTPAEAVRAGGDYLVIGRPIGDAPDPAGAAEMILDEIMAG.

Residues D15, K37, 64–73 (DLKFHDIPNT), T126, R187, Q196, G216, and R217 each bind substrate. K66 serves as the catalytic Proton donor.

The protein belongs to the OMP decarboxylase family. Type 1 subfamily. In terms of assembly, homodimer.

The catalysed reaction is orotidine 5'-phosphate + H(+) = UMP + CO2. The protein operates within pyrimidine metabolism; UMP biosynthesis via de novo pathway; UMP from orotate: step 2/2. In terms of biological role, catalyzes the decarboxylation of orotidine 5'-monophosphate (OMP) to uridine 5'-monophosphate (UMP). This is Orotidine 5'-phosphate decarboxylase from Geobacter sulfurreducens (strain ATCC 51573 / DSM 12127 / PCA).